The sequence spans 255 residues: MKHIPRKRFGQNFLTDDGVLHNIILAIDPQPQDTMVEIGPGLAAMTRLLLDGVNQMHVVELDRDLVERLKKTFDPKKLIIHSADALQFDFSTIPVPAGSKLRVVGNLPYNISSPLLFHLAEMAPHVQDQHFMLQKEVVERMVAEPGSKTYGRLSVMLQWRYHMELMFIVPPTAFDPPPRVESAIVRMIPIEKPLPCDQTKLEQVVLKAFSQRRKVIRNCLAGMFSEADLIEAGINPQMRPETISLAQYVALANRL.

S-adenosyl-L-methionine contacts are provided by Asn-12, Leu-14, Gly-39, Glu-60, Asp-84, and Asn-106.

Belongs to the class I-like SAM-binding methyltransferase superfamily. rRNA adenine N(6)-methyltransferase family. RsmA subfamily.

Its subcellular location is the cytoplasm. The catalysed reaction is adenosine(1518)/adenosine(1519) in 16S rRNA + 4 S-adenosyl-L-methionine = N(6)-dimethyladenosine(1518)/N(6)-dimethyladenosine(1519) in 16S rRNA + 4 S-adenosyl-L-homocysteine + 4 H(+). Functionally, specifically dimethylates two adjacent adenosines (A1518 and A1519) in the loop of a conserved hairpin near the 3'-end of 16S rRNA in the 30S particle. May play a critical role in biogenesis of 30S subunits. The sequence is that of Ribosomal RNA small subunit methyltransferase A from Herminiimonas arsenicoxydans.